A 573-amino-acid chain; its full sequence is Urease subunit alpha (573 aa).

The Urease domain maps to 136-573 (GAIDCHVHFI…LPMAQRYFLF (438 aa)). The Ni(2+) site is built by His-141, His-143, and Lys-224. Lys-224 carries the post-translational modification N6-carboxylysine. His-226 serves as a coordination point for substrate. The Ni(2+) site is built by His-253 and His-279. Catalysis depends on His-327, which acts as the Proton donor. A Ni(2+)-binding site is contributed by Asp-367.

The protein belongs to the metallo-dependent hydrolases superfamily. Urease alpha subunit family. In terms of assembly, heterotrimer of UreA (gamma), UreB (beta) and UreC (alpha) subunits. Three heterotrimers associate to form the active enzyme. It depends on Ni cation as a cofactor. Carboxylation allows a single lysine to coordinate two nickel ions.

Its subcellular location is the cytoplasm. It catalyses the reaction urea + 2 H2O + H(+) = hydrogencarbonate + 2 NH4(+). The protein operates within nitrogen metabolism; urea degradation; CO(2) and NH(3) from urea (urease route): step 1/1. This is Urease subunit alpha from Nocardia farcinica (strain IFM 10152).